A 294-amino-acid polypeptide reads, in one-letter code: Ribosomal RNA small subunit methyltransferase A (294 aa).

Positions 31, 33, 58, 79, 111, and 136 each coordinate S-adenosyl-L-methionine.

It belongs to the class I-like SAM-binding methyltransferase superfamily. rRNA adenine N(6)-methyltransferase family. RsmA subfamily.

The protein localises to the cytoplasm. It carries out the reaction adenosine(1518)/adenosine(1519) in 16S rRNA + 4 S-adenosyl-L-methionine = N(6)-dimethyladenosine(1518)/N(6)-dimethyladenosine(1519) in 16S rRNA + 4 S-adenosyl-L-homocysteine + 4 H(+). Specifically dimethylates two adjacent adenosines (A1518 and A1519) in the loop of a conserved hairpin near the 3'-end of 16S rRNA in the 30S particle. May play a critical role in biogenesis of 30S subunits. The polypeptide is Ribosomal RNA small subunit methyltransferase A (Lactobacillus acidophilus (strain ATCC 700396 / NCK56 / N2 / NCFM)).